A 367-amino-acid polypeptide reads, in one-letter code: MTHLNFETRMPLGTAVIDQFLGLRPHPTKIQATYVWIDGTGENLRSKTRTFDKLPKRIEDYPIWNYDGSSTGQAKGRDSDRYLRPVAAYPDPFLGGGNKLVMCDTLDHQMQPTATSHRQACAEIMHEIRDTRPWFGMEQEYLIVDRDEHPLGWPKHGFPDPQGKYYCSVGADRAFGREVVETHYRACLHAGLNIFGTNAEVTPGQWEFQIGTCEGIDMGDQLWMSRYILHRVAEQFGVCVSLDPKPKVTMGDWNGAGCHTNFSTAEMRAPGGIAAIEAAMTGLKRTHLEAMKVYDPHGGEDNLRRLTGRHETSSADKFSWGVANRGCSIRIPRQVAAERKGYLEDRRPSSNCDPYQVTAMIAQSILF.

In terms of domain architecture, GS beta-grasp spans Ile30–Met110. The GS catalytic domain maps to His117–Phe367.

This sequence belongs to the glutamine synthetase family. In terms of assembly, homooctamer.

The protein localises to the cytoplasm. It catalyses the reaction L-glutamate + NH4(+) + ATP = L-glutamine + ADP + phosphate + H(+). The protein is Probable glutamine synthetase (gln-2) of Caenorhabditis elegans.